The chain runs to 248 residues: 2,3-bisphosphoglycerate-dependent phosphoglycerate mutase (248 aa).

Residues 8-15 (RHGESTWN), 21-22 (TG), Arg60, 87-90 (ERHY), Lys98, 114-115 (RR), and 183-184 (GN) contribute to the substrate site. The active-site Tele-phosphohistidine intermediate is His9. The Proton donor/acceptor role is filled by Glu87.

Belongs to the phosphoglycerate mutase family. BPG-dependent PGAM subfamily. As to quaternary structure, homodimer.

It carries out the reaction (2R)-2-phosphoglycerate = (2R)-3-phosphoglycerate. It participates in carbohydrate degradation; glycolysis; pyruvate from D-glyceraldehyde 3-phosphate: step 3/5. Functionally, catalyzes the interconversion of 2-phosphoglycerate and 3-phosphoglycerate. In Burkholderia lata (strain ATCC 17760 / DSM 23089 / LMG 22485 / NCIMB 9086 / R18194 / 383), this protein is 2,3-bisphosphoglycerate-dependent phosphoglycerate mutase.